A 473-amino-acid polypeptide reads, in one-letter code: Mitochondrial adenyl nucleotide antiporter SLC25A24-A (473 aa).

The interval 1 to 173 is regulatory N-terminal domain; that stretch reads MLEQVQKFLL…RFWKHSTVLD (173 aa). Over 1–197 the chain is Mitochondrial intermembrane; it reads MLEQVQKFLL…EKKTGQWWKH (197 aa). EF-hand domains follow at residues 19-54, 55-88, 86-121, and 122-157; these read DSHT…MGMA, VGKG…EEHE, EHEK…LGIN, and ISLD…NPAD. Aspartate 32, asparagine 34, aspartate 36, lysine 38, glutamate 43, aspartate 68, asparagine 70, aspartate 72, histidine 74, glutamate 79, aspartate 99, asparagine 101, aspartate 103, lysine 105, glutamate 110, aspartate 135, aspartate 137, threonine 139, threonine 141, and glutamate 146 together coordinate Ca(2+). The interval 159–168 is linker region; it reads IQQIIRFWKH. A C-terminal transmembrane transporter domain region spans residues 174–473; sequence IGDSLTIPDE…YEKMKIQLGI (300 aa). Solcar repeat units lie at residues 192–277, 285–370, and 382–470; these read GQWW…YKKL, LGTA…LKNY, and PGVL…MKIQ. The helical transmembrane segment at 198–215 threads the bilayer; that stretch reads LLAGGMAGAVSRTGTAPL. Residues 216-251 lie on the Mitochondrial matrix side of the membrane; it reads DRLKVMMQVHGTKGNSNIITGLKQMVKEGGVRSLWR. A helical membrane pass occupies residues 252–271; that stretch reads GNGVNVIKIAPETAMKFWAY. Residues 272-294 lie on the Mitochondrial intermembrane side of the membrane; sequence EQYKKLFTSESGKLGTAERFIAG. A helical transmembrane segment spans residues 295–308; that stretch reads SLAGATAQTSIYPM. Over 309–344 the chain is Mitochondrial matrix; sequence EVLKTRLAVGKTGQYSGMFDCAKKIMQKEGILAFYK. Residues 345–364 form a helical membrane-spanning segment; that stretch reads GYIPNILGIIPYAGIDLAIY. Residues 365–387 are Mitochondrial intermembrane-facing; it reads ETLKNYWLQNYAKDSANPGVLVL. The chain crosses the membrane as a helical span at residues 388–405; the sequence is LGCGTVSSTCGQLASYPL. Residues 406–444 lie on the Mitochondrial matrix side of the membrane; sequence ALIRTRMQAQASIEGAPQLNMGGLFRKIVAKEGFFGLYT. The chain crosses the membrane as a helical span at residues 445–464; sequence GIAPNFLKVLPAVSISYVVY. Residues 465–473 are Mitochondrial intermembrane-facing; it reads EKMKIQLGI.

Belongs to the mitochondrial carrier (TC 2.A.29) family. As to quaternary structure, monomer.

The protein localises to the mitochondrion inner membrane. The enzyme catalyses Mg(2+)(out) + phosphate(in) + ATP(out) = Mg(2+)(in) + phosphate(out) + ATP(in). It carries out the reaction ADP(out) + phosphate(in) + H(+)(out) = ADP(in) + phosphate(out) + H(+)(in). It catalyses the reaction AMP(out) + phosphate(in) = AMP(in) + phosphate(out). The catalysed reaction is phosphate(in) + ATP(out) + 2 H(+)(out) = phosphate(out) + ATP(in) + 2 H(+)(in). The enzyme catalyses dADP(in) + ADP(out) = dADP(out) + ADP(in). It carries out the reaction Mg(2+)(in) + ADP(out) + ATP(in) + H(+)(out) = Mg(2+)(out) + ADP(in) + ATP(out) + H(+)(in). It catalyses the reaction ADP(out) + diphosphate(in) = ADP(in) + diphosphate(out). The catalysed reaction is dAMP(in) + ADP(out) + H(+)(out) = dAMP(out) + ADP(in) + H(+)(in). The enzyme catalyses 3'-AMP(in) + ADP(out) + H(+)(out) = 3'-AMP(out) + ADP(in) + H(+)(in). It carries out the reaction dAMP(out) + phosphate(in) = dAMP(in) + phosphate(out). It catalyses the reaction 3'-AMP(out) + phosphate(in) = 3'-AMP(in) + phosphate(out). The catalysed reaction is dADP(out) + phosphate(in) + H(+)(out) = dADP(in) + phosphate(out) + H(+)(in). Its activity is regulated as follows. Activated by an increase in cytosolic calcium levels that induce a conformational change of the N-terminal regulatory domain, uncapping the channel and allowing transport. Inhibited by bathophenanthroline, mersalyl, p-hydroxymercuribenzoate, bromcresol purple and tannic acid. In terms of biological role, electroneutral antiporter that mediates the transport of adenyl nucleotides through the inner mitochondrial membrane. Originally identified as an ATP-magnesium/inorganic phosphate antiporter, it also acts as a broad specificity adenyl nucleotide antiporter. By regulating the mitochondrial matrix adenyl nucleotide pool could adapt to changing cellular energetic demands and indirectly regulate adenyl nucleotide-dependent metabolic pathways. This Xenopus laevis (African clawed frog) protein is Mitochondrial adenyl nucleotide antiporter SLC25A24-A (slc25a24-a).